The sequence spans 621 residues: ATP-dependent lipid A-core flippase (621 aa).

The next 5 membrane-spanning stretches (helical) occupy residues 32–52 (IVAALIAIFGVAATESYLAAF), 91–111 (VWGTENKIWTVPLFLIILVVI), 192–212 (IVLLYLNWQLSLIVVLMFPLL), 286–306 (SPFSELIASIALAVVIFIALW), and 312–332 (YTTIGEFMAFIVAMLQMYAPI). The 312-residue stretch at 33–344 (VAALIAIFGV…LANISIPMQT (312 aa)) folds into the ABC transmembrane type-1 domain. Residues 378–611 (FRNVDVEYRS…NGYYTMLRNI (234 aa)) enclose the ABC transporter domain. 410–417 (GRSGSGKS) is a binding site for ATP.

It belongs to the ABC transporter superfamily. Lipid exporter (TC 3.A.1.106) family. Homodimer.

The protein resides in the cell inner membrane. The enzyme catalyses ATP + H2O + lipid A-core oligosaccharideSide 1 = ADP + phosphate + lipid A-core oligosaccharideSide 2.. Involved in lipopolysaccharide (LPS) biosynthesis. Translocates lipid A-core from the inner to the outer leaflet of the inner membrane. Transmembrane domains (TMD) form a pore in the inner membrane and the ATP-binding domain (NBD) is responsible for energy generation. The chain is ATP-dependent lipid A-core flippase from Neisseria meningitidis serogroup A / serotype 4A (strain DSM 15465 / Z2491).